Here is a 255-residue protein sequence, read N- to C-terminus: MGNSCYNIVATLLLVLNFERTRSLQDPCSNCPAGTFCDNNRNQICSPCPPNSFSSAGGQRTCDICRQCKGVFRTRKECSSTSNAECDCTPGFHCLGAGCSMCEQDCKQGQELTKKGCKDCCFGTFNDQKRGICRPWTNCSLDGKSVLVNGTKERDVVCGPSPADLSPGASSVTPPAPAREPGHSPQIISFFLALTSTALLFLLFFLTLRFSVVKRGRKKLLYIFKQPFMRPVQTTQEEDGCSCRFPEEEEGGCEL.

A signal peptide spans 1–23; the sequence is MGNSCYNIVATLLLVLNFERTRS. TNFR-Cys repeat units follow at residues 24–45, 47–86, 87–118, and 119–159; these read LQDPCSNCPAGTFCDNNRNQIC, PCPPNSFSSAGGQRTCDICRQCKGVFRTRKECSSTSNAEC, DCTPGFHCLGAGCSMCEQDCKQGQELTKKGCK, and DCCF…VVCG. Residues 24–186 are Extracellular-facing; it reads LQDPCSNCPA…PAREPGHSPQ (163 aa). 9 cysteine pairs are disulfide-bonded: Cys-28/Cys-37, Cys-31/Cys-45, Cys-48/Cys-62, Cys-65/Cys-78, Cys-68/Cys-86, Cys-88/Cys-94, Cys-99/Cys-106, Cys-102/Cys-117, and Cys-121/Cys-133. 2 N-linked (GlcNAc...) asparagine glycosylation sites follow: Asn-138 and Asn-149. Cysteines 139 and 158 form a disulfide. The segment at 161-180 is disordered; sequence SPADLSPGASSVTPPAPARE. Residues 187–213 form a helical membrane-spanning segment; that stretch reads IISFFLALTSTALLFLLFFLTLRFSVV. Topologically, residues 214–255 are cytoplasmic; that stretch reads KRGRKKLLYIFKQPFMRPVQTTQEEDGCSCRFPEEEEGGCEL. The interaction with LRR-1 stretch occupies residues 214 to 255; the sequence is KRGRKKLLYIFKQPFMRPVQTTQEEDGCSCRFPEEEEGGCEL.

In terms of assembly, predominantly homodimeric, but may also exist as a monomer. Interacts with TRAF1, TRAF2 and TRAF3. Interacts with LRR-repeat protein 1/LRR-1. Expressed on the surface of activated T-cells.

It is found in the cell membrane. Receptor for TNFSF9/4-1BBL. Conveys a signal that enhances CD8(+) T-cell survival, cytotoxicity, and mitochondrial activity, thereby promoting immunity against viruses and tumors. The chain is Tumor necrosis factor receptor superfamily member 9 (TNFRSF9) from Homo sapiens (Human).